We begin with the raw amino-acid sequence, 334 residues long: Protein-methionine-sulfoxide reductase catalytic subunit MsrP (334 aa).

A signal peptide (tat-type signal) is located at residues 1–44; it reads MKKNQFLKESDVTAESVFFMKRRQVLKALGISATALSLPHAAHA. Mo-molybdopterin is bound by residues Asn88, 91–92, Cys146, Thr181, Asn233, Arg238, and 249–251; these read YE and GIK.

The protein belongs to the MsrP family. In terms of assembly, heterodimer of a catalytic subunit (MsrP) and a heme-binding subunit (MsrQ). It depends on Mo-molybdopterin as a cofactor. In terms of processing, predicted to be exported by the Tat system. The position of the signal peptide cleavage has not been experimentally proven.

It localises to the periplasm. The catalysed reaction is L-methionyl-[protein] + a quinone + H2O = L-methionyl-(S)-S-oxide-[protein] + a quinol. It catalyses the reaction L-methionyl-[protein] + a quinone + H2O = L-methionyl-(R)-S-oxide-[protein] + a quinol. Part of the MsrPQ system that repairs oxidized periplasmic proteins containing methionine sulfoxide residues (Met-O), using respiratory chain electrons. Thus protects these proteins from oxidative-stress damage caused by reactive species of oxygen and chlorine generated by the host defense mechanisms. MsrPQ is essential for the maintenance of envelope integrity under bleach stress, rescuing a wide series of structurally unrelated periplasmic proteins from methionine oxidation, including the primary periplasmic chaperone SurA and the lipoprotein Pal. The catalytic subunit MsrP is non-stereospecific, being able to reduce both (R-) and (S-) diastereoisomers of methionine sulfoxide. The sequence is that of Protein-methionine-sulfoxide reductase catalytic subunit MsrP from Escherichia coli (strain K12 / MC4100 / BW2952).